A 327-amino-acid chain; its full sequence is Phenylalanine--tRNA ligase alpha subunit (327 aa).

E252 contributes to the Mg(2+) binding site.

It belongs to the class-II aminoacyl-tRNA synthetase family. Phe-tRNA synthetase alpha subunit type 1 subfamily. As to quaternary structure, tetramer of two alpha and two beta subunits. It depends on Mg(2+) as a cofactor.

The protein resides in the cytoplasm. It catalyses the reaction tRNA(Phe) + L-phenylalanine + ATP = L-phenylalanyl-tRNA(Phe) + AMP + diphosphate + H(+). This is Phenylalanine--tRNA ligase alpha subunit from Shewanella frigidimarina (strain NCIMB 400).